The following is a 375-amino-acid chain: Protein SSUH2 homolog (375 aa).

As to expression, expressed in enterocytes of small and large intestinal mucosa (at protein level). Expressed in chromaffine and interstitial cells. Expressed in peripheral blood and gingival cells.

It localises to the cytoplasm. It is found in the nucleus. Functionally, plays a role in odontogenesis. The protein is Protein SSUH2 homolog of Homo sapiens (Human).